The primary structure comprises 532 residues: Cyclin-L1 (532 aa).

Cyclin-like regions lie at residues 94 to 196 (ELIQ…RVLK) and 209 to 293 (KIIV…ETLR). T331 carries the post-translational modification Phosphothreonine. Residues 332–532 (PALSTLGGFS…SRSGHGRHRR (201 aa)) are disordered. S341 and S344 each carry phosphoserine. Residues K345 and K353 each participate in a glycyl lysine isopeptide (Lys-Gly) (interchain with G-Cter in SUMO2) cross-link. The segment covering 348-358 (SPREVKAEEKS) has biased composition (basic and acidic residues). Residues S358 and S361 each carry the phosphoserine modification. The span at 367–376 (VKKEPEDRQQ) shows a compositional bias: basic and acidic residues. Residue K368 forms a Glycyl lysine isopeptide (Lys-Gly) (interchain with G-Cter in SUMO2) linkage. S380 is subject to Phosphoserine. 4 stretches are compositionally biased toward basic residues: residues 388–424 (DSKR…RRSR), 444–458 (RRHH…KAKH), 466–482 (SNRH…RSQS), and 492–504 (KKHR…HRDR). Positions 396 to 438 (RSASRSRSRTRSRSRSHSPRRHYNNRRSRSGTYSSRSRSRSRS) are RS. The residue at position 451 (S451) is a Phosphoserine. The span at 505 to 514 (RERSRSFERS) shows a compositional bias: basic and acidic residues. Residues 515-532 (HKGKHHGGSRSGHGRHRR) show a composition bias toward basic residues.

It belongs to the cyclin family. Cyclin L subfamily. As to quaternary structure, interacts with POLR2A via its hyperphosphorylated C-terminal domain (CTD). Interacts with CDK11A, CDK11B, CDK12 and CDK13. May form a ternary complex with CDK11B and casein kinase II (CKII). Interacts with pre-mRNA-splicing factors, including at least SRSF1, SRSF2 and SRSF7/SLU7. In terms of tissue distribution, widely expressed (at protein level).

The protein localises to the nucleus speckle. Its subcellular location is the nucleus. The protein resides in the nucleoplasm. It localises to the cytoplasm. Its function is as follows. Involved in pre-mRNA splicing. Functions in association with cyclin-dependent kinases (CDKs). May play a role in the regulation of RNA polymerase II (pol II). Inhibited by the CDK-specific inhibitor CDKN1A/p21. The protein is Cyclin-L1 (Ccnl1) of Mus musculus (Mouse).